Consider the following 287-residue polypeptide: Undecaprenyl-diphosphatase (287 aa).

7 helical membrane passes run 50–70 (PGVS…IAYF), 97–117 (LGFA…GIKF), 131–151 (IPSI…AEQV), 160–180 (VVLG…LLPG), 206–226 (FLLG…DALA), 234–254 (LPLL…IDWL), and 264–284 (WLFV…WGVY).

The protein belongs to the UppP family.

The protein resides in the cell inner membrane. The catalysed reaction is di-trans,octa-cis-undecaprenyl diphosphate + H2O = di-trans,octa-cis-undecaprenyl phosphate + phosphate + H(+). Catalyzes the dephosphorylation of undecaprenyl diphosphate (UPP). Confers resistance to bacitracin. This Synechococcus sp. (strain CC9605) protein is Undecaprenyl-diphosphatase.